A 42-amino-acid polypeptide reads, in one-letter code: Potassium channel toxin gamma-KTx 1.3 (42 aa).

Disulfide bonds link Cys-5/Cys-23, Cys-11/Cys-34, Cys-20/Cys-39, and Cys-24/Cys-41.

Belongs to the ergtoxin family. Gamma-KTx 1 subfamily. Expressed by the venom gland.

Its subcellular location is the secreted. In terms of biological role, blocks Kv11/ERG potassium channels. This is Potassium channel toxin gamma-KTx 1.3 from Centruroides gracilis (Slenderbrown scorpion).